We begin with the raw amino-acid sequence, 582 residues long: uncharacterized protein (582 aa).

Positions 1 to 23 (MAHEGSRQVRDRGVTRSKAEKVR) are enriched in basic and acidic residues. Disordered stretches follow at residues 1–29 (MAHE…TVPV), 110–133 (AVAE…SWAQ), and 147–221 (LENF…SSAG). Serine 242 bears the Phosphoserine mark. Disordered stretches follow at residues 310–331 (RPSA…SAHH) and 551–582 (LSSG…PKPR). Residues 311–320 (PSASCQQQRA) show a composition bias toward polar residues.

This is an uncharacterized protein from Homo sapiens (Human).